Consider the following 184-residue polypeptide: Large ribosomal subunit protein uL18 (184 aa).

It belongs to the universal ribosomal protein uL18 family. In terms of assembly, part of the 50S ribosomal subunit. Contacts the 5S and 23S rRNAs.

This is one of the proteins that bind and probably mediate the attachment of the 5S RNA into the large ribosomal subunit, where it forms part of the central protuberance. The protein is Large ribosomal subunit protein uL18 of Haloferax mediterranei (strain ATCC 33500 / DSM 1411 / JCM 8866 / NBRC 14739 / NCIMB 2177 / R-4) (Halobacterium mediterranei).